The primary structure comprises 436 residues: Adenylosuccinate synthetase (436 aa).

Residues Gly-13–Lys-19 and Gly-41–Thr-43 each bind GTP. Catalysis depends on Asp-14, which acts as the Proton acceptor. Mg(2+)-binding residues include Asp-14 and Gly-41. IMP contacts are provided by residues Asp-14 to Lys-17, Asn-39 to His-42, Thr-131, Arg-145, Gln-226, Thr-241, and Arg-309. The Proton donor role is filled by His-42. Substrate is bound at residue Thr-305–Arg-311. GTP is bound by residues Arg-311, Lys-337–Asp-339, and Ser-419–Gly-421.

It belongs to the adenylosuccinate synthetase family. In terms of assembly, homodimer. Mg(2+) is required as a cofactor.

The protein localises to the cytoplasm. It catalyses the reaction IMP + L-aspartate + GTP = N(6)-(1,2-dicarboxyethyl)-AMP + GDP + phosphate + 2 H(+). It functions in the pathway purine metabolism; AMP biosynthesis via de novo pathway; AMP from IMP: step 1/2. Plays an important role in the de novo pathway of purine nucleotide biosynthesis. Catalyzes the first committed step in the biosynthesis of AMP from IMP. The chain is Adenylosuccinate synthetase from Aromatoleum aromaticum (strain DSM 19018 / LMG 30748 / EbN1) (Azoarcus sp. (strain EbN1)).